The following is a 116-amino-acid chain: Phage-like element PBSX protein XkdD (116 aa).

This chain is Phage-like element PBSX protein XkdD (xkdD), found in Bacillus subtilis (strain 168).